The following is a 99-amino-acid chain: Large ribosomal subunit protein eL21 (99 aa).

It belongs to the eukaryotic ribosomal protein eL21 family.

The chain is Large ribosomal subunit protein eL21 from Staphylothermus marinus (strain ATCC 43588 / DSM 3639 / JCM 9404 / F1).